The sequence spans 718 residues: MDQKSDNAGKCPVAHTVPKGRSNRDWWPDQLDVQVLHQHSGLSDPMGKAFNYAEEFKKLDLEELKKDLHALMTESQDWWPADFGHYGGLFIRMAWHSAGTYRITDGRGGAGQGQQRFAPLNSWPDNANLDKARRLLWPIKQKYGNRISWADLMILTGNVALESMGFQTFGFAGGRADVWEPQELFWGPEGTWLGDERYSGERQLDEPLAAVQMGLIYVNPEGPNGNPDPVAAAREIRETFARMAMNDEETVALIAGGHTFGKTHGAGDPSFIGPDPEGGAIEDQGLGWKSTFGTGVGKDAITGGPEVTWSQTPTRWSNYFFENLFNYEWELTKSPAGAHQWKAKNADASIPDAFDASKKHVPTMLTTDLSLRFDPIYEKISRRFLENPDQFADAFARAWFKLTHRDMGPKVRYLGPEVPAEDLIWQDVIPAVDHKLVDENDVADLKGKVLASGLSVQELVSTAWASASTFRGSDKRGGANGARIRLAPQKDWEVNQPAQLARVLSVLEGIQKDFNTAHTGGKKISLADLIVLAGAAGVEKAAKAGGHDITVPFTPGRADASEAQTDAASFAALEPRADGFRNYVSRRRRQFMKPEEALVDRAQLLTLTAPELTVLVGGLRVVFTSRPEVLTNDFFVNLLDMGTQWSPMAEKEGVYEGRDRKTHEVKWTGTRVDLIFGSHSQLRALAEVYASSDAKEKFVGDFVAAWTKVMNADRFDLV.

Residues 1-24 form a disordered region; that stretch reads MDQKSDNAGKCPVAHTVPKGRSNR. The segment at residues 95–217 is a cross-link (tryptophyl-tyrosyl-methioninium (Trp-Tyr) (with M-243)); sequence WHSAGTYRIT…LAAVQMGLIY (123 aa). The active-site Proton acceptor is the His96. A cross-link (tryptophyl-tyrosyl-methioninium (Tyr-Met) (with W-95)) is located at residues 217–243; sequence YVNPEGPNGNPDPVAAAREIRETFARM. Heme b is bound at residue His258.

The protein belongs to the peroxidase family. Peroxidase/catalase subfamily. Homodimer or homotetramer. Heme b is required as a cofactor. In terms of processing, formation of the three residue Trp-Tyr-Met cross-link is important for the catalase, but not the peroxidase activity of the enzyme.

It carries out the reaction H2O2 + AH2 = A + 2 H2O. It catalyses the reaction 2 H2O2 = O2 + 2 H2O. Its function is as follows. Bifunctional enzyme with both catalase and broad-spectrum peroxidase activity. The sequence is that of Catalase-peroxidase from Sinorhizobium fredii (strain NBRC 101917 / NGR234).